The sequence spans 672 residues: Acetoacetyl-CoA synthetase (672 aa).

This sequence belongs to the ATP-dependent AMP-binding enzyme family.

It localises to the cytoplasm. The protein resides in the cytosol. The enzyme catalyses acetoacetate + ATP + CoA = acetoacetyl-CoA + AMP + diphosphate. In terms of biological role, converts acetoacetate to acetoacetyl-CoA in the cytosol. Ketone body-utilizing enzyme, responsible for the synthesis of cholesterol and fatty acids. This Mus musculus (Mouse) protein is Acetoacetyl-CoA synthetase (Aacs).